A 215-amino-acid polypeptide reads, in one-letter code: Urease accessory protein UreG (215 aa).

Residues 1–21 (MNAPASSPARRTKKLPPLRVG) form a disordered region. Residue 24-31 (GPVGSGKT) coordinates GTP.

The protein belongs to the SIMIBI class G3E GTPase family. UreG subfamily. In terms of assembly, homodimer. UreD, UreF and UreG form a complex that acts as a GTP-hydrolysis-dependent molecular chaperone, activating the urease apoprotein by helping to assemble the nickel containing metallocenter of UreC. The UreE protein probably delivers the nickel.

It localises to the cytoplasm. In terms of biological role, facilitates the functional incorporation of the urease nickel metallocenter. This process requires GTP hydrolysis, probably effectuated by UreG. The polypeptide is Urease accessory protein UreG (Burkholderia vietnamiensis (strain G4 / LMG 22486) (Burkholderia cepacia (strain R1808))).